A 382-amino-acid polypeptide reads, in one-letter code: Gap junction alpha-1 protein (382 aa).

The Cytoplasmic segment spans residues 2 to 23; it reads GDWSALGKLLDKVQAYSTAGGK. Serine 5 is modified (phosphoserine). A helical transmembrane segment spans residues 24-44; that stretch reads VWLSVLFIFRILLLGTAVESA. The Extracellular segment spans residues 45–76; the sequence is WGDEQSAFRCNTQQPGCENVCYDKSFPISHVR. 2 disulfides stabilise this stretch: cysteine 54-cysteine 192 and cysteine 187-cysteine 198. A helical transmembrane segment spans residues 77 to 97; that stretch reads FWVLQIIFVSVPTLLYLAHVF. Residues 98 to 155 are Cytoplasmic-facing; that stretch reads YVMRKEEKLNKKEEELKVAQTDGVNVDMHLKQIEIKKFKYGIEEHGKVKMRGGLLRTY. Residue lysine 144 forms a Glycyl lysine isopeptide (Lys-Gly) (interchain with G-Cter in SUMO) linkage. A helical transmembrane segment spans residues 156 to 176; the sequence is IISILFKSIFEVAFLLIQWYI. The Extracellular segment spans residues 177-207; the sequence is YGFSLSAVYTCKRDPCPHQVDCFLSRPTEKT. The helical transmembrane segment at 208-228 threads the bilayer; it reads IFIIFMLVVSLVSLALNIIEL. The Cytoplasmic segment spans residues 229-382; it reads FYVFFKGVKD…SRPRPDDLEI (154 aa). Lysine 237 participates in a covalent cross-link: Glycyl lysine isopeptide (Lys-Gly) (interchain with G-Cter in SUMO). Residues 244-382 are interaction with NOV; the sequence is SDPYHATSGA…SRPRPDDLEI (139 aa). Phosphotyrosine is present on tyrosine 247. Residues serine 255 and serine 262 each carry the phosphoserine modification. The interval 264–382 is interaction with UBQLN4; the sequence is KYAYFNGCSS…SRPRPDDLEI (119 aa). Cysteine 271 bears the S-nitrosocysteine mark. Residue threonine 275 is modified to Phosphothreonine. 2 positions are modified to phosphoserine: serine 306 and serine 314. A compositionally biased stretch (polar residues) spans 317–332; that stretch reads QNRMGQAGSTISNSHA. A disordered region spans residues 317 to 382; it reads QNRMGQAGST…SRPRPDDLEI (66 aa). Serine 325 carries the post-translational modification Phosphoserine; by CK1. Threonine 326 is modified (phosphothreonine). Residues serine 328 and serine 330 each carry the phosphoserine; by CK1 modification. Serine 344 and serine 365 each carry phosphoserine. Residues 362-374 show a composition bias toward low complexity; the sequence is RPSSRASSRASSR. Position 368 is a phosphoserine; by PKC/PRKCG and PKC/PRKCD (serine 368). Phosphoserine occurs at positions 369 and 373.

The protein belongs to the connexin family. Alpha-type (group II) subfamily. In terms of assembly, a connexon is composed of a hexamer of connexins. Interacts (via C-terminus) with TJP1. Interacts (via C-terminus) with SRC (via SH3 domain). Interacts (not ubiquitinated) with UBQLN4 (via UBA domain). Interacts with SGSM3 and CNST. Interacts with RIC1/CIP150. Interacts with CSNK1D. Interacts with NOV. Interacts with TMEM65. Interacts with ANK3/ANKG and PKP2. Phosphorylated at Ser-368 by PRKCG; phosphorylation induces disassembly of gap junction plaques and inhibition of gap junction activity. Phosphorylation at Ser-325, Ser-328 and Ser-330 by CK1 modulates gap junction assembly. Phosphorylation at Ser-368 by PRKCD triggers its internalization into small vesicles leading to proteasome-mediated degradation. In terms of processing, sumoylated with SUMO1, SUMO2 and SUMO3, which may regulate the level of functional Cx43 gap junctions at the plasma membrane. May be desumoylated by SENP1 or SENP2. Post-translationally, S-nitrosylation at Cys-271 is enriched at the muscle endothelial gap junction in arteries, it augments channel permeability and may regulate of smooth muscle cell to endothelial cell communication. Acetylated in the developing cortex; leading to delocalization from the cell membrane. Expressed at intercalated disks in the heart (at protein level). Expressed in the fetal cochlea.

The protein localises to the cell membrane. It localises to the cell junction. It is found in the gap junction. The protein resides in the endoplasmic reticulum. In terms of biological role, gap junction protein that acts as a regulator of bladder capacity. A gap junction consists of a cluster of closely packed pairs of transmembrane channels, the connexons, through which materials of low MW diffuse from one cell to a neighboring cell. May play a critical role in the physiology of hearing by participating in the recycling of potassium to the cochlear endolymph. Negative regulator of bladder functional capacity: acts by enhancing intercellular electrical and chemical transmission, thus sensitizing bladder muscles to cholinergic neural stimuli and causing them to contract. May play a role in cell growth inhibition through the regulation of NOV expression and localization. Plays an essential role in gap junction communication in the ventricles. This Homo sapiens (Human) protein is Gap junction alpha-1 protein (GJA1).